Consider the following 104-residue polypeptide: Phosphoribosyl-ATP pyrophosphatase (104 aa).

Belongs to the PRA-PH family.

The protein resides in the cytoplasm. The catalysed reaction is 1-(5-phospho-beta-D-ribosyl)-ATP + H2O = 1-(5-phospho-beta-D-ribosyl)-5'-AMP + diphosphate + H(+). The protein operates within amino-acid biosynthesis; L-histidine biosynthesis; L-histidine from 5-phospho-alpha-D-ribose 1-diphosphate: step 2/9. The protein is Phosphoribosyl-ATP pyrophosphatase of Streptococcus gordonii (strain Challis / ATCC 35105 / BCRC 15272 / CH1 / DL1 / V288).